The following is a 960-amino-acid chain: Angiomotin-like protein 1 (960 aa).

A disordered region spans residues 196-248 (SQFFRGQQPPPPPPQQQPGAVGHSYYMAGGASQKARTEGRPTVSRANSGQAHK). Phosphoserine occurs at positions 243, 271, and 297. Residues 261 to 281 (RSLSERIMQLSLERNGAKQHL) adopt a coiled-coil conformation. 3 disordered regions span residues 277-317 (AKQH…EYPF), 381-407 (LPFPSTAQQHSPVSSQNSSVSGPLHSV), and 413-432 (PPMALGAAPPPPAASPSQQL). Over residues 388–401 (QQHSPVSSQNSSVS) the composition is skewed to low complexity. Coiled coils occupy residues 440-641 (VERA…WLER) and 667-697 (ALMELVREKEERILALEADMTKWEQKYVEES). At serine 722 the chain carries Phosphoserine. A coiled-coil region spans residues 731 to 761 (SLEAHIWQEEEEVVQATRRCQDMEYTIKNLH). A disordered region spans residues 775-826 (QQRSRKDAGKTDSSSLRPARSVPSIAAATGTHSRQTSLTSSQLAEERKEEKT). Phosphoserine occurs at positions 795, 807, and 830. Residues 804 to 817 (GTHSRQTSLTSSQL) are compositionally biased toward polar residues. Positions 842–952 (NDHASTPLLP…NLLHKPEFPD (111 aa)) are disordered. Low complexity predominate over residues 845 to 870 (ASTPLLPTPSAATLSPPTPGTSASSA). A compositionally biased stretch (polar residues) spans 898–911 (PTRSRLSGTPSNSP). A Phosphoserine modification is found at serine 904. Position 906 is a phosphothreonine (threonine 906). Position 910 is a phosphoserine (serine 910). Positions 957-960 (EVLI) match the PDZ-binding motif.

Belongs to the angiomotin family. Post-translationally, polyubiquitinated by NEDD4, leading to proteasomal degradation.

The protein resides in the cell junction. The protein localises to the tight junction. In terms of biological role, inhibits the Wnt/beta-catenin signaling pathway, probably by recruiting CTNNB1 to recycling endosomes and hence preventing its translocation to the nucleus. In Bos taurus (Bovine), this protein is Angiomotin-like protein 1 (AMOTL1).